Consider the following 457-residue polypeptide: UDP-N-acetylmuramoyl-tripeptide--D-alanyl-D-alanine ligase (457 aa).

113 to 119 (GSNGKTT) serves as a coordination point for ATP.

It belongs to the MurCDEF family. MurF subfamily.

It localises to the cytoplasm. It catalyses the reaction D-alanyl-D-alanine + UDP-N-acetyl-alpha-D-muramoyl-L-alanyl-gamma-D-glutamyl-meso-2,6-diaminopimelate + ATP = UDP-N-acetyl-alpha-D-muramoyl-L-alanyl-gamma-D-glutamyl-meso-2,6-diaminopimeloyl-D-alanyl-D-alanine + ADP + phosphate + H(+). It participates in cell wall biogenesis; peptidoglycan biosynthesis. Its function is as follows. Involved in cell wall formation. Catalyzes the final step in the synthesis of UDP-N-acetylmuramoyl-pentapeptide, the precursor of murein. The sequence is that of UDP-N-acetylmuramoyl-tripeptide--D-alanyl-D-alanine ligase from Bacillus subtilis (strain 168).